The chain runs to 94 residues: Co-chaperonin GroES (94 aa).

Belongs to the GroES chaperonin family. Heptamer of 7 subunits arranged in a ring. Interacts with the chaperonin GroEL.

It localises to the cytoplasm. In terms of biological role, together with the chaperonin GroEL, plays an essential role in assisting protein folding. The GroEL-GroES system forms a nano-cage that allows encapsulation of the non-native substrate proteins and provides a physical environment optimized to promote and accelerate protein folding. GroES binds to the apical surface of the GroEL ring, thereby capping the opening of the GroEL channel. In Desulfitobacterium hafniense (strain DSM 10664 / DCB-2), this protein is Co-chaperonin GroES.